A 372-amino-acid polypeptide reads, in one-letter code: Tyrosine--tRNA ligase (372 aa).

The L-tyrosine site is built by Tyr-37, Tyr-169, Gln-173, Asp-176, and Gln-191. The short motif at Lys-246 to Ser-250 is the 'KMSKS' region element. ATP is bound at residue Lys-249.

It belongs to the class-I aminoacyl-tRNA synthetase family. TyrS type 4 subfamily. Homodimer.

The protein localises to the cytoplasm. The enzyme catalyses tRNA(Tyr) + L-tyrosine + ATP = L-tyrosyl-tRNA(Tyr) + AMP + diphosphate + H(+). Functionally, catalyzes the attachment of tyrosine to tRNA(Tyr) in a two-step reaction: tyrosine is first activated by ATP to form Tyr-AMP and then transferred to the acceptor end of tRNA(Tyr). This chain is Tyrosine--tRNA ligase, found in Pyrobaculum calidifontis (strain DSM 21063 / JCM 11548 / VA1).